A 638-amino-acid chain; its full sequence is Chaperone protein DnaK (638 aa).

Threonine 198 is modified (phosphothreonine; by autocatalysis). Disordered stretches follow at residues 539–559 (DGLA…LASD) and 602–638 (QAKA…DDKK). Positions 611-623 (GQAHDAGQEKPAD) are enriched in basic and acidic residues. A compositionally biased stretch (acidic residues) spans 624 to 638 (DVVDAEFEEVKDDKK).

The protein belongs to the heat shock protein 70 family.

Its function is as follows. Acts as a chaperone. This is Chaperone protein DnaK from Shewanella frigidimarina (strain NCIMB 400).